Reading from the N-terminus, the 215-residue chain is 3-isopropylmalate dehydratase small subunit (215 aa).

This sequence belongs to the LeuD family. LeuD type 1 subfamily. Heterodimer of LeuC and LeuD.

It catalyses the reaction (2R,3S)-3-isopropylmalate = (2S)-2-isopropylmalate. It functions in the pathway amino-acid biosynthesis; L-leucine biosynthesis; L-leucine from 3-methyl-2-oxobutanoate: step 2/4. Its function is as follows. Catalyzes the isomerization between 2-isopropylmalate and 3-isopropylmalate, via the formation of 2-isopropylmaleate. This Ectopseudomonas mendocina (strain ymp) (Pseudomonas mendocina) protein is 3-isopropylmalate dehydratase small subunit.